Consider the following 229-residue polypeptide: Glutathione S-transferase 1 (229 aa).

The region spanning 2 to 83 (SPVKVFGHPM…YILRKYGGTA (82 aa)) is the GST N-terminal domain. Residues 41–42 (HK), 54–55 (KM), and 67–68 (ES) each bind glutathione. Positions 93–223 (GIEELAMVDV…RVCKHMPTEF (131 aa)) constitute a GST C-terminal domain.

It belongs to the GST superfamily. Phi family.

The enzyme catalyses RX + glutathione = an S-substituted glutathione + a halide anion + H(+). Conjugation of reduced glutathione to a wide number of exogenous and endogenous hydrophobic electrophiles. This is Glutathione S-transferase 1 (GSTA1) from Triticum aestivum (Wheat).